The primary structure comprises 141 residues: Hemoglobin subunit mu (141 aa).

The 141-residue stretch at 1–141 folds into the Globin domain; it reads MLSAQERAQI…VAVVLTEKYR (141 aa). Positions 58 and 87 each coordinate heme b.

The protein belongs to the globin family. Expressed in erythroid tissues.

The polypeptide is Hemoglobin subunit mu (HBM) (Homo sapiens (Human)).